The sequence spans 226 residues: GTP-binding nuclear protein Ran-3 (226 aa).

Positions 14–178 constitute a Small GTPase Ran-type domain; that stretch reads GYPSFKLILV…LYLARKLTGD (165 aa). 25 to 32 is a GTP binding site; that stretch reads DGGTGKTT. The tract at residues 44-52 is switch-I; sequence KRYEPTIGV. GTP-binding positions include Gly75, 129 to 132, and 157 to 159; these read NKVD and SAK. Residues 75–91 are switch-II; it reads GQEKFGGLRDGYYIHGH.

Belongs to the small GTPase superfamily. Ran family. Found in a nuclear export complex with RanGTP, exportin and pre-miRNA.

It is found in the nucleus. GTP-binding protein involved in nucleocytoplasmic transport. Required for the import of protein into the nucleus and also for RNA export. Involved in chromatin condensation and control of cell cycle. This Oryza sativa subsp. indica (Rice) protein is GTP-binding nuclear protein Ran-3 (RAN3).